The chain runs to 306 residues: Lymphotoxin-beta (306 aa).

Topologically, residues 1-27 are cytoplasmic; it reads MGTRGLQGLGGRPQGRGCLLLAVAGAT. The helical; Signal-anchor for type II membrane protein transmembrane segment at 28–48 threads the bilayer; sequence SLVTLLLAVPITVLAVLALVP. Residues 49 to 306 are Extracellular-facing; sequence QDQGRRVEKI…KTFFGAVMVG (258 aa). Disordered stretches follow at residues 63 to 112 and 127 to 151; these read AQAQ…GPVA and PAAD…DLNP. Over residues 74–85 the composition is skewed to low complexity; that stretch reads PSCILPSPSSLS. Residues 95–112 are compositionally biased toward polar residues; it reads QRSNASRNLASTSQGPVA. Residue Asn98 is glycosylated (N-linked (GlcNAc...) asparagine). The 152-residue stretch at 154 to 305 folds into the THD domain; the sequence is PAAHLIGAWM…GKTFFGAVMV (152 aa). Asn284 carries N-linked (GlcNAc...) asparagine glycosylation.

Belongs to the tumor necrosis factor family. In terms of assembly, heterotrimer of either two LTB and one LTA subunits or (less prevalent) two LTA and one LTB subunits.

The protein resides in the membrane. Functionally, cytokine that binds to LTBR/TNFRSF3. May play a specific role in immune response regulation. Provides the membrane anchor for the attachment of the heterotrimeric complex to the cell surface. In Mus musculus (Mouse), this protein is Lymphotoxin-beta (Ltb).